The sequence spans 452 residues: Netrin-5 (452 aa).

Residues 1–34 (MTDYRTLFSSPGAGSTVTTPITLSLLLLLSQATS) form the signal peptide. Cystine bridges form between Cys173–Cys182, Cys175–Cys191, Cys193–Cys202, Cys205–Cys225, Cys228–Cys240, Cys230–Cys247, Cys249–Cys258, Cys261–Cys275, Cys298–Cys376, Cys302–Cys378, and Cys317–Cys438. 2 consecutive Laminin EGF-like domains span residues 173–227 (CQCH…PCLP) and 228–277 (CQCH…PCQR). Residues 298-438 (CQGYCNVSVS…LQQKERGGAC (141 aa)) form the NTR domain. A glycan (N-linked (GlcNAc...) asparagine) is linked at Asn303.

The protein localises to the secreted. Plays a role in neurogenesis. Prevents motor neuron cell body migration out of the neural tube. This Mus musculus (Mouse) protein is Netrin-5 (Ntn5).